A 383-amino-acid chain; its full sequence is uncharacterized protein (383 aa).

The protein belongs to the peptidase M20 family.

This is an uncharacterized protein from Staphylococcus aureus (strain MRSA252).